The following is a 158-amino-acid chain: Glutamyl-tRNA(Gln) amidotransferase subunit C, mitochondrial (158 aa).

Belongs to the GatC family. As to quaternary structure, subunit of the heterotrimeric GatCAB amidotransferase (AdT) complex, composed of A, B and C subunits.

It localises to the mitochondrion. The enzyme catalyses L-glutamyl-tRNA(Gln) + L-glutamine + ATP + H2O = L-glutaminyl-tRNA(Gln) + L-glutamate + ADP + phosphate + H(+). Allows the formation of correctly charged Gln-tRNA(Gln) through the transamidation of misacylated Glu-tRNA(Gln) in the mitochondria. The reaction takes place in the presence of glutamine and ATP through an activated gamma-phospho-Glu-tRNA(Gln). This chain is Glutamyl-tRNA(Gln) amidotransferase subunit C, mitochondrial, found in Drosophila grimshawi (Hawaiian fruit fly).